A 287-amino-acid chain; its full sequence is 4-hydroxybenzoate octaprenyltransferase (287 aa).

9 helical membrane passes run 22–42 (IGTYLLLWPTYWALWIASDGW), 45–65 (LQLLLVFSLGVFIMRSAGCVI), 95–115 (AINLFGVLIGMAFGLVLMLSW), 116–136 (STIYLSVVAVLLAAIYPFMKR), 140–160 (LPQLFLGAAFSWGMIMAFSEA), 162–182 (GEIPLVAWLLFTANLCWTIAY), 214–234 (IGFLQLMTLALLWTVGDILAF), 237–257 (PYQLCIIAAAGLFSYQQLLIV), and 264–284 (CFQAFLHNHWVGLVVFVGIAI).

This sequence belongs to the UbiA prenyltransferase family. The cofactor is Mg(2+).

The protein resides in the cell inner membrane. The enzyme catalyses all-trans-octaprenyl diphosphate + 4-hydroxybenzoate = 4-hydroxy-3-(all-trans-octaprenyl)benzoate + diphosphate. The protein operates within cofactor biosynthesis; ubiquinone biosynthesis. Functionally, catalyzes the prenylation of para-hydroxybenzoate (PHB) with an all-trans polyprenyl group. Mediates the second step in the final reaction sequence of ubiquinone-8 (UQ-8) biosynthesis, which is the condensation of the polyisoprenoid side chain with PHB, generating the first membrane-bound Q intermediate 3-octaprenyl-4-hydroxybenzoate. The protein is 4-hydroxybenzoate octaprenyltransferase of Colwellia psychrerythraea (strain 34H / ATCC BAA-681) (Vibrio psychroerythus).